The chain runs to 429 residues: Glutamate-1-semialdehyde 2,1-aminomutase (429 aa).

Position 264 is an N6-(pyridoxal phosphate)lysine (Lys-264).

Belongs to the class-III pyridoxal-phosphate-dependent aminotransferase family. HemL subfamily. Homodimer. It depends on pyridoxal 5'-phosphate as a cofactor.

It localises to the cytoplasm. The catalysed reaction is (S)-4-amino-5-oxopentanoate = 5-aminolevulinate. The protein operates within porphyrin-containing compound metabolism; protoporphyrin-IX biosynthesis; 5-aminolevulinate from L-glutamyl-tRNA(Glu): step 2/2. The chain is Glutamate-1-semialdehyde 2,1-aminomutase from Campylobacter curvus (strain 525.92).